Here is a 356-residue protein sequence, read N- to C-terminus: DNA polymerase IV (356 aa).

Residues 6–187 (IIHIDMDYFF…LDIGDFPGVG (182 aa)) enclose the UmuC domain. Mg(2+)-binding residues include D10 and D105. Residue E106 is part of the active site.

It belongs to the DNA polymerase type-Y family. As to quaternary structure, monomer. The cofactor is Mg(2+).

Its subcellular location is the cytoplasm. The catalysed reaction is DNA(n) + a 2'-deoxyribonucleoside 5'-triphosphate = DNA(n+1) + diphosphate. In terms of biological role, poorly processive, error-prone DNA polymerase involved in untargeted mutagenesis. Copies undamaged DNA at stalled replication forks, which arise in vivo from mismatched or misaligned primer ends. These misaligned primers can be extended by PolIV. Exhibits no 3'-5' exonuclease (proofreading) activity. May be involved in translesional synthesis, in conjunction with the beta clamp from PolIII. The protein is DNA polymerase IV of Staphylococcus aureus (strain Mu50 / ATCC 700699).